The following is a 623-amino-acid chain: Alpha-1,2-mannosyltransferase Alg9 (623 aa).

Transmembrane regions (helical) follow at residues Leu-152 to Met-172, Leu-193 to Trp-223, Phe-229 to Leu-254, Phe-266 to Ile-284, Phe-326 to Leu-348, Phe-360 to Ala-378, Ile-390 to Phe-410, and Phe-431 to Tyr-452.

It belongs to the glycosyltransferase 22 family.

The protein localises to the endoplasmic reticulum membrane. It carries out the reaction an alpha-D-Man-(1-&gt;2)-alpha-D-Man-(1-&gt;2)-alpha-D-Man-(1-&gt;3)-[alpha-D-Man-(1-&gt;3)-alpha-D-Man-(1-&gt;6)]-beta-D-Man-(1-&gt;4)-beta-D-GlcNAc-(1-&gt;4)-alpha-D-GlcNAc-diphospho-di-trans,poly-cis-dolichol + a di-trans,poly-cis-dolichyl beta-D-mannosyl phosphate = an alpha-D-Man-(1-&gt;2)-alpha-D-Man-(1-&gt;2)-alpha-D-Man-(1-&gt;3)-[alpha-D-Man-(1-&gt;2)-alpha-D-Man-(1-&gt;3)-alpha-D-Man-(1-&gt;6)]-beta-D-Man-(1-&gt;4)-beta-D-GlcNAc-(1-&gt;4)-alpha-D-GlcNAc-diphospho-di-trans,poly-cis-dolichol + a di-trans,poly-cis-dolichyl phosphate + H(+). The enzyme catalyses an alpha-D-Man-(1-&gt;2)-alpha-D-Man-(1-&gt;2)-alpha-D-Man-(1-&gt;3)-[alpha-D-Man-(1-&gt;2)-alpha-D-Man-(1-&gt;3)-[alpha-D-Man-(1-&gt;6)]-alpha-D-Man-(1-&gt;6)]-beta-D-Man-(1-&gt;4)-beta-D-GlcNAc-(1-&gt;4)-alpha-D-GlcNAc-diphospho-di-trans,poly-cis-dolichol + a di-trans,poly-cis-dolichyl beta-D-mannosyl phosphate = an alpha-D-Man-(1-&gt;2)-alpha-D-Man-(1-&gt;2)-alpha-D-Man-(1-&gt;3)-[alpha-D-Man-(1-&gt;2)-alpha-D-Man-(1-&gt;3)-[alpha-D-Man-(1-&gt;2)-alpha-D-Man-(1-&gt;6)]-alpha-D-Man-(1-&gt;6)]-beta-D-Man-(1-&gt;4)-beta-D-GlcNAc-(1-&gt;4)-alpha-D-GlcNAc-diphospho-di-trans,poly-cis-dolichol + a di-trans,poly-cis-dolichyl phosphate + H(+). It functions in the pathway protein modification; protein glycosylation. In terms of biological role, probable alpha-1,2-mannosyltransferase involved in the N-glycosylation pathway. Probably involved in glycosylation of the TNF receptor grnd, regulating its ligand affinity. Required for normal epithelial growth and architecture. Suppressor of JNK-dependent intestinal stem cell proliferation. The chain is Alpha-1,2-mannosyltransferase Alg9 from Drosophila melanogaster (Fruit fly).